Reading from the N-terminus, the 178-residue chain is MORN repeat-containing protein 5 (178 aa).

MORN repeat units follow at residues 8 to 30, 31 to 53, and 54 to 75; these read YDGD…THTR, YVGE…NGSK, and YEGT…DGLK.

The protein resides in the cell projection. Its subcellular location is the cilium. The protein localises to the flagellum. The chain is MORN repeat-containing protein 5 (morn5) from Danio rerio (Zebrafish).